A 383-amino-acid chain; its full sequence is MSNRWLLPENIADVLPSEARKIEELRRRMLDLFRTYGYELVMPPMLEYLESLLTGTGHDLDLRTLKLVDQLSGRTLGLRADITPQVARIDAHLLNRPGVTRLCYAGNVLHARPAGFNATREPIQIGAEIYGHAGLEADVEIQELMLAALQVAGLSDIRLDLCHAGILEALLAALPSIRQIEEAMFAALETKDVPALRELTQGLPDTERDALLALPTLYGGVEVIERARATLPASPAIGRALDELAALAAQVSNASVNIDLSDLRGYHYHSGVMFTAYVSGLPNYVARGGRYDKVGEAFGRARPATGFSLDLREVAALSPVEVRAQAIFAPWDADPALRFAITTLRANGEIVIQSLPGHTHELDEFNCDRQLQRQGANWVVVPR.

Belongs to the class-II aminoacyl-tRNA synthetase family. HisZ subfamily. In terms of assembly, heteromultimer composed of HisG and HisZ subunits.

The protein resides in the cytoplasm. It functions in the pathway amino-acid biosynthesis; L-histidine biosynthesis; L-histidine from 5-phospho-alpha-D-ribose 1-diphosphate: step 1/9. In terms of biological role, required for the first step of histidine biosynthesis. May allow the feedback regulation of ATP phosphoribosyltransferase activity by histidine. This chain is ATP phosphoribosyltransferase regulatory subunit, found in Cupriavidus metallidurans (strain ATCC 43123 / DSM 2839 / NBRC 102507 / CH34) (Ralstonia metallidurans).